A 462-amino-acid chain; its full sequence is Cysteine--tRNA ligase (462 aa).

Residue cysteine 30 participates in Zn(2+) binding. The 'HIGH' region signature appears at 32–42; sequence MTVYDYCHIGH. Zn(2+) is bound by residues cysteine 214, histidine 239, and glutamate 243. A 'KMSKS' region motif is present at residues 271–275; sequence KMSKS. Lysine 274 lines the ATP pocket.

The protein belongs to the class-I aminoacyl-tRNA synthetase family. Monomer. Zn(2+) serves as cofactor.

It localises to the cytoplasm. The enzyme catalyses tRNA(Cys) + L-cysteine + ATP = L-cysteinyl-tRNA(Cys) + AMP + diphosphate. The chain is Cysteine--tRNA ligase from Herminiimonas arsenicoxydans.